A 291-amino-acid polypeptide reads, in one-letter code: Pirin (291 aa).

Positions 56, 58, 101, and 103 each coordinate Fe cation.

The protein belongs to the pirin family. As to quaternary structure, may interact with NF1/CTF1. Interacts with BCL3. Identified in a complex comprised of PIR, BLC3, NFKB1 and target DNA. The cofactor is Fe cation.

The protein localises to the nucleus. It is found in the cytoplasm. The catalysed reaction is quercetin + O2 = 2-(3,4-dihydroxybenzoyloxy)-4,6-dihydroxybenzoate + CO. It functions in the pathway flavonoid metabolism; quercetin degradation. Functionally, transcriptional coregulator of NF-kappa-B which facilitates binding of NF-kappa-B proteins to target kappa-B genes in a redox-state-dependent manner. May be required for efficient terminal myeloid maturation of hematopoietic cells. Has quercetin 2,3-dioxygenase activity (in vitro). The sequence is that of Pirin (Pir) from Rattus norvegicus (Rat).